The following is a 209-amino-acid chain: Ribosomal RNA large subunit methyltransferase E (209 aa).

Residues Gly-63, Trp-65, Asp-83, Asp-99, and Asp-124 each coordinate S-adenosyl-L-methionine. Lys-164 functions as the Proton acceptor in the catalytic mechanism.

The protein belongs to the class I-like SAM-binding methyltransferase superfamily. RNA methyltransferase RlmE family.

The protein localises to the cytoplasm. It catalyses the reaction uridine(2552) in 23S rRNA + S-adenosyl-L-methionine = 2'-O-methyluridine(2552) in 23S rRNA + S-adenosyl-L-homocysteine + H(+). In terms of biological role, specifically methylates the uridine in position 2552 of 23S rRNA at the 2'-O position of the ribose in the fully assembled 50S ribosomal subunit. This chain is Ribosomal RNA large subunit methyltransferase E, found in Alkalilimnicola ehrlichii (strain ATCC BAA-1101 / DSM 17681 / MLHE-1).